Here is a 478-residue protein sequence, read N- to C-terminus: Ankyrin repeat and BTB/POZ domain-containing protein 1 (478 aa).

ANK repeat units lie at residues 1–31 (MDTSDLFASCRKGDVGRVRYLLEQRDVEVNV) and 35–64 (WDSTPLYYACLCGHEELVLYLLANGARCEA). BTB domains lie at 115 to 182 (SDVV…DIGV) and 272 to 346 (PDIC…ELSP). A coiled-coil region spans residues 451-477 (VQTYSAIEEAQQRLRALEDLLVSIGLD).

In terms of tissue distribution, ubiquitously expressed in all fetal tissues examined including heart, brain, liver, and kidney. Also expressed at lower levels in both adult heart and hypertrophic heart.

It localises to the cytoplasm. In terms of biological role, may act as a mediator of the PTEN growth-suppressive signaling pathway. May play a role in developmental processes. This Homo sapiens (Human) protein is Ankyrin repeat and BTB/POZ domain-containing protein 1.